The chain runs to 554 residues: MTSIKVVCRIRPTNQLEQDLGGNNVIYPLNDSTVHIETSDYSGNFVFDRVFHPSSTQNDIFSYSIESTVDDLFLGYNGTVLAYGQTGSGKTYTMMGIENNFEKEGMTPRMLRRIFDKIRDSPSTTEYEVKVSYMEIYMEKIHDLLSEKNDRLTVHEDKLQGVYVQGLKTIYVSSETEALDILNKGMGSRAVASTSMNAQSSRSHSIFVLEVVQTDTESGETRRGRLFLVDLAGSESVGKSGAVGQTLEEAKKINRSLSTLGMVINSLTDSKLSHVPYRDSKLTRILKESLGGNSRTTLIINCSPDSYNATETLSTLRFGHRAKSIKNKAVVNSELSVDEMKRQLYIYKDALSRCVCGARINNNLDYNNCHSNVWSGEHSLTLSNLAEKSNLKEAEIIQGNRTIQESNNDRDESTVASIHRHNFDSDSINRLYAEAQLELKQRDGVLSSTKQQLSDLMTALGDAQERYVELVKNHRVNSNLTANNSLNDKPGFTIEQKDKNFSINNERNNFLQKLSTLDSSLAALVNVQRKLIKALISKERPQNGTVIKKIQGGT.

The Kinesin motor domain maps to 3 to 325 (SIKVVCRIRP…LRFGHRAKSI (323 aa)). Residues 84 to 91 (GQTGSGKT) and 233 to 240 (GSESVGKS) contribute to the ATP site. Residues 446 to 473 (LSSTKQQLSDLMTALGDAQERYVELVKN) adopt a coiled-coil conformation.

Belongs to the TRAFAC class myosin-kinesin ATPase superfamily. Kinesin family.

The protein localises to the cytoplasm. It is found in the cytoskeleton. Functionally, cytoplasmic motor that could play a role in Golgi membrane recycling. The sequence is that of Kinesin-like protein 3 (klp3) from Schizosaccharomyces pombe (strain 972 / ATCC 24843) (Fission yeast).